Reading from the N-terminus, the 295-residue chain is Gamma-glutamyl-L-1-hydroxyisopropylamide hydrolase (295 aa).

In terms of domain architecture, Glutamine amidotransferase type-1 spans 5-221; sequence RILICDGNTE…LRESARSLVE (217 aa). Catalysis depends on Cys-104, which acts as the Nucleophile. Active-site residues include His-200 and Glu-202.

It carries out the reaction gamma-L-glutamyl-L-alaninol + H2O = L-alaninol + L-glutamate. Involved in the degradation of isopropylamine, which is a constituent of the herbicides atrazine. Catalyzes the hydrolysis of gamma-glutamyl-L-alaninol (GALO) to L-alaninol and L-glutamate. It can also uses gamma-glutamyl-isopropylamide, gamma-glutamyl-ethylamide, L-glutamine, and gamma-glutamyl-p-nitroanilide. The chain is Gamma-glutamyl-L-1-hydroxyisopropylamide hydrolase (ipuF) from Pseudomonas sp.